The following is a 252-amino-acid chain: tRNA pseudouridine synthase A (252 aa).

Catalysis depends on Asp52, which acts as the Nucleophile. A substrate-binding site is contributed by Tyr111.

The protein belongs to the tRNA pseudouridine synthase TruA family. Homodimer.

The catalysed reaction is uridine(38/39/40) in tRNA = pseudouridine(38/39/40) in tRNA. Formation of pseudouridine at positions 38, 39 and 40 in the anticodon stem and loop of transfer RNAs. The polypeptide is tRNA pseudouridine synthase A (Methylorubrum populi (strain ATCC BAA-705 / NCIMB 13946 / BJ001) (Methylobacterium populi)).